Consider the following 523-residue polypeptide: DELLA protein RGL3 (523 aa).

Positions 1-28 (MKRSHQETSVEEEAPSMVEKLENGCGGG) are disordered. The DELLA motif signature appears at 34 to 38 (DEFLA). The short motif at 56–60 (LEQLE) is the LEXLE motif element. The VHYNP motif motif lies at 78–82 (VHYNP). Residues 148 to 516 (VLIEETGVRL…KPLIAASAWK (369 aa)) enclose the GRAS domain. The leucine repeat I (LRI) stretch occupies residues 155–209 (VRLVQALVACAEAVQLENLSLADALVKRVGLLAASQAGAMGKVATYFAEALARRI). The VHIID stretch occupies residues 228-293 (QMNFYDSCPY…GGPPSFRLTG (66 aa)). A VHIID motif is present at residues 259–263 (VHVID). Residues 305-337 (ELGWKLAQLAQAIGVEFKFNGLTTERLSDLEPD) are leucine repeat II (LRII). The segment at 348–437 (LVVNSVFELH…EVYLGRQILN (90 aa)) is PFYRE. The LXXLL motif motif lies at 356–360 (LHPVL). Residues 440-516 (ATEGSDRIER…KPLIAASAWK (77 aa)) form an SAW region.

The protein belongs to the GRAS family. DELLA subfamily. As to quaternary structure, interacts directly with the GID2/SLY1 component of the SCF(GID2) complex, suggesting that it may be ubiquitinated. Interacts (via N-terminus) with GID1A, GID1B and GID1B (via N-terminus). Interacts with the BOI proteins BOI, BRG1, BRG2 and BRG3. Phosphorylated. In terms of processing, may be ubiquitinated. In terms of tissue distribution, expressed at very low level. Mainly expressed in germinating seeds and flowers and siliques. Not expressed in other tissues.

The protein localises to the nucleus. In terms of biological role, probable transcriptional regulator that acts as a repressor of the gibberellin (GA) signaling pathway. No effect of the BOI proteins on its stability. Probably acts by participating in large multiprotein complexes that repress transcription of GA-inducible genes. Its activity may be regulated by phytohormones such as auxin and ethylene. The sequence is that of DELLA protein RGL3 (RGL3) from Arabidopsis thaliana (Mouse-ear cress).